Reading from the N-terminus, the 489-residue chain is Capsid protein (489 aa).

Positions 79-144 (GETSEEESDS…QPKTIPGQKQ (66 aa)) are disordered. Positions 81–94 (TSEEESDSGEEPEF) are enriched in acidic residues. The segment covering 95-110 (EQVRMDRTGGTEIPKE) has biased composition (basic and acidic residues). A Nuclear localization signal motif is present at residues 122 to 125 (RKRK). Over residues 135-144 (QPKTIPGQKQ) the composition is skewed to polar residues. The CCHC-type zinc-finger motif lies at 412-429 (CRCWICNIEGHYANECPN). Positions 467–489 (EEEEETSTEESDGSSTSEDSDSD) are disordered.

Belongs to the caulimoviridae capsid protein family. Interacts (via nuclear localization signal) with host importin alpha.

The protein resides in the virion. The protein localises to the host nucleus. Functionally, self assembles to form an icosahedral capsid, about 50 nm in diameter, nm, composed of 420 subunits of the viral capsid protein. The capsid encapsulates the genomic dsDNA. Following virus entry into host cell, provides nuclear import of the viral genome. Virus particles do not enter the nucleus, but dock at the nuclear membrane through the interaction with host importins. This is Capsid protein from Arabidopsis thaliana (Mouse-ear cress).